Consider the following 331-residue polypeptide: Major outer membrane protein P.IB (331 aa).

Positions 1–19 are cleaved as a signal peptide; that stretch reads MKKSLIALTLAALPVAAMA.

It belongs to the Gram-negative porin family. As to quaternary structure, homotrimer.

The protein localises to the cell outer membrane. Functionally, serves as a slightly cation selective porin. This Neisseria meningitidis serogroup B protein is Major outer membrane protein P.IB (porB).